A 449-amino-acid polypeptide reads, in one-letter code: Protein phosphatase fem-2 (449 aa).

The interaction with fem-1 and fem-3 stretch occupies residues 28 to 34 (EEAFADE). Residues 54-56 (IRF) are interaction with fem-3. Positions 160–424 (GIHVSGDQLK…DNVSVVIGFL (265 aa)) constitute a PPM-type phosphatase domain. Mg(2+)-binding residues include D202, G203, D370, and D415.

It belongs to the PP2C family. As to quaternary structure, component of a complex containing fem-1, fem-2 and fem-3. Interacts (via N-terminus) with fem-1 and fem-3. Component of the CBC(fem-1) E3 ubiquitin-protein ligase complex, at least composed of cul-2, elc-1, tra-1, fem-1, fem-2 and fem-3; mediates the ubiquitination and subsequent proteasomal degradation of tra-1. Interacts with tra-1. Interacts with sel-10. Mg(2+) is required as a cofactor. The cofactor is Mn(2+).

It catalyses the reaction O-phospho-L-seryl-[protein] + H2O = L-seryl-[protein] + phosphate. The catalysed reaction is O-phospho-L-threonyl-[protein] + H2O = L-threonyl-[protein] + phosphate. Functionally, dephosphorylates auto-phosphorylated Ca(2+)/calmodulin-dependent protein kinase unc-43/CAMKII in vitro. Involved in the regulation of sex determination. Together with fem-3, required for male sexual development by promoting the proteasomal-mediated degradation of tra-1, a transcription repressor of male-specific genes. Promotes apoptosis. In Caenorhabditis elegans, this protein is Protein phosphatase fem-2.